The primary structure comprises 68 residues: Beta-toxin Cl13 (68 aa).

The region spanning K1–K66 is the LCN-type CS-alpha/beta domain. Intrachain disulfides connect C12–C65, C16–C41, C25–C46, and C29–C48. K66 is modified (lysine amide).

The protein belongs to the long (4 C-C) scorpion toxin superfamily. Sodium channel inhibitor family. Beta subfamily. Expressed by the venom gland.

The protein localises to the secreted. In terms of biological role, beta toxins bind voltage-independently at site-4 of sodium channels (Nav) and shift the voltage of activation toward more negative potentials thereby affecting sodium channel activation and promoting spontaneous and repetitive firing. Inhibits sodium channels Nav1.4/SCN4A, Nav1.5/SCN5A and Nav1.6/SCN8A. Also has a weak inhibitory effect on Nav1.2/SCN2A. Is lethal to mice. The protein is Beta-toxin Cl13 of Centruroides limpidus (Mexican scorpion).